Consider the following 459-residue polypeptide: Ribulose bisphosphate carboxylase (459 aa).

Asn111 contributes to the substrate binding site. Lys166 acts as the Proton acceptor in catalysis. Lys168 lines the substrate pocket. Residues Lys191, Asp193, and Glu194 each contribute to the Mg(2+) site. An N6-carboxylysine modification is found at Lys191. His287 (proton acceptor) is an active-site residue. Substrate-binding residues include Arg288, His321, and Ser368.

The protein belongs to the RuBisCO large chain family. Type II subfamily. As to quaternary structure, homodimer. Mg(2+) serves as cofactor.

It catalyses the reaction 2 (2R)-3-phosphoglycerate + 2 H(+) = D-ribulose 1,5-bisphosphate + CO2 + H2O. The catalysed reaction is D-ribulose 1,5-bisphosphate + O2 = 2-phosphoglycolate + (2R)-3-phosphoglycerate + 2 H(+). In terms of biological role, ruBisCO catalyzes two reactions: the carboxylation of D-ribulose 1,5-bisphosphate, the primary event in carbon dioxide fixation, as well as the oxidative fragmentation of the pentose substrate. Both reactions occur simultaneously and in competition at the same active site. The chain is Ribulose bisphosphate carboxylase from Cereibacter sphaeroides (strain ATCC 17029 / ATH 2.4.9) (Rhodobacter sphaeroides).